The primary structure comprises 291 residues: Pirin-like protein (291 aa).

The protein belongs to the pirin family.

It localises to the nucleus. The polypeptide is Pirin-like protein (Solanum lycopersicum (Tomato)).